A 309-amino-acid polypeptide reads, in one-letter code: Homoserine kinase (309 aa).

Position 91-101 (Pro-91–Cys-101) interacts with ATP.

This sequence belongs to the GHMP kinase family. Homoserine kinase subfamily.

It is found in the cytoplasm. The catalysed reaction is L-homoserine + ATP = O-phospho-L-homoserine + ADP + H(+). The protein operates within amino-acid biosynthesis; L-threonine biosynthesis; L-threonine from L-aspartate: step 4/5. Its function is as follows. Catalyzes the ATP-dependent phosphorylation of L-homoserine to L-homoserine phosphate. In Pectobacterium carotovorum subsp. carotovorum (strain PC1), this protein is Homoserine kinase.